The chain runs to 122 residues: UPF0102 protein CTC_01256 (122 aa).

This sequence belongs to the UPF0102 family.

This is UPF0102 protein CTC_01256 from Clostridium tetani (strain Massachusetts / E88).